The chain runs to 305 residues: Ornithine carbamoyltransferase (305 aa).

Carbamoyl phosphate is bound by residues 52–55 (STRT), Gln79, Arg103, and 130–133 (HPCQ). L-ornithine-binding positions include Asn161, Asp221, and 225–226 (SM). Carbamoyl phosphate-binding positions include 261-262 (CL) and Arg289.

The protein belongs to the aspartate/ornithine carbamoyltransferase superfamily. OTCase family.

It localises to the cytoplasm. It carries out the reaction carbamoyl phosphate + L-ornithine = L-citrulline + phosphate + H(+). It participates in amino-acid biosynthesis; L-arginine biosynthesis; L-arginine from L-ornithine and carbamoyl phosphate: step 1/3. Functionally, reversibly catalyzes the transfer of the carbamoyl group from carbamoyl phosphate (CP) to the N(epsilon) atom of ornithine (ORN) to produce L-citrulline. This chain is Ornithine carbamoyltransferase, found in Methanocorpusculum labreanum (strain ATCC 43576 / DSM 4855 / Z).